The chain runs to 400 residues: Acetate kinase (400 aa).

Asparagine 9 is a Mg(2+) binding site. An ATP-binding site is contributed by lysine 16. Arginine 90 provides a ligand contact to substrate. Aspartate 147 serves as the catalytic Proton donor/acceptor. ATP is bound by residues 207 to 211 (HIGNG), 282 to 284 (DLR), and 330 to 334 (GIGEN). Position 385 (glutamate 385) interacts with Mg(2+).

Belongs to the acetokinase family. In terms of assembly, homodimer. The cofactor is Mg(2+). Mn(2+) serves as cofactor.

The protein localises to the cytoplasm. It carries out the reaction acetate + ATP = acetyl phosphate + ADP. Its pathway is metabolic intermediate biosynthesis; acetyl-CoA biosynthesis; acetyl-CoA from acetate: step 1/2. Catalyzes the formation of acetyl phosphate from acetate and ATP. Can also catalyze the reverse reaction. The polypeptide is Acetate kinase (Staphylococcus aureus (strain Mu3 / ATCC 700698)).